The primary structure comprises 371 residues: DNA replication and repair protein RecF (371 aa).

30–37 is an ATP binding site; that stretch reads GENAQGKT.

The protein belongs to the RecF family.

It localises to the cytoplasm. Functionally, the RecF protein is involved in DNA metabolism; it is required for DNA replication and normal SOS inducibility. RecF binds preferentially to single-stranded, linear DNA. It also seems to bind ATP. This chain is DNA replication and repair protein RecF, found in Staphylococcus haemolyticus (strain JCSC1435).